Reading from the N-terminus, the 161-residue chain is Ecotin (161 aa).

The N-terminal stretch at 1–23 is a signal peptide; sequence MGNFTVRATAGLMLASLSTLAHA. An intrachain disulfide couples cysteine 69 to cysteine 106.

The protein belongs to the protease inhibitor I11 (ecotin) family. In terms of assembly, homodimer.

It localises to the periplasm. General inhibitor of family S1 serine proteases. This chain is Ecotin, found in Pseudomonas fluorescens (strain Pf0-1).